The primary structure comprises 211 residues: Transmembrane protein 247 (211 aa).

Basic and acidic residues-rich tracts occupy residues 1–10 (MAMEDREVME) and 31–45 (PEGKPKASLDAEVPK). Residues 1-90 (MAMEDREVME…AGDGPGLESV (90 aa)) form a disordered region. Residues 63–73 (PGPPRSLPPKS) show a composition bias toward pro residues. Residues 119-148 (KYLHQENERQRQHEEVMEQLQQQQQQQQAL) are a coiled coil. 2 consecutive transmembrane segments (helical) span residues 159–179 (LLLPQNQFAMFFYCFIFIHII) and 186–206 (VFFLFSKHYLFCLAAILLCLI).

Its subcellular location is the membrane. This is Transmembrane protein 247 (Tmem247) from Mus musculus (Mouse).